The following is an 864-amino-acid chain: DNA mismatch repair protein MutS (864 aa).

607–614 (GPNMGGKS) contacts ATP.

The protein belongs to the DNA mismatch repair MutS family.

Functionally, this protein is involved in the repair of mismatches in DNA. It is possible that it carries out the mismatch recognition step. This protein has a weak ATPase activity. In Neisseria meningitidis serogroup B (strain ATCC BAA-335 / MC58), this protein is DNA mismatch repair protein MutS.